The following is a 260-amino-acid chain: Indole-3-glycerol phosphate synthase (260 aa).

This sequence belongs to the TrpC family.

The enzyme catalyses 1-(2-carboxyphenylamino)-1-deoxy-D-ribulose 5-phosphate + H(+) = (1S,2R)-1-C-(indol-3-yl)glycerol 3-phosphate + CO2 + H2O. The protein operates within amino-acid biosynthesis; L-tryptophan biosynthesis; L-tryptophan from chorismate: step 4/5. This Bacteroides thetaiotaomicron (strain ATCC 29148 / DSM 2079 / JCM 5827 / CCUG 10774 / NCTC 10582 / VPI-5482 / E50) protein is Indole-3-glycerol phosphate synthase.